The chain runs to 208 residues: GTP-binding protein YPTM1 (208 aa).

Residues 15 to 23 (GDSSVGKSC), 33 to 40 (YVDSYIST), 63 to 67 (DTAGQ), 121 to 124 (NKCD), and 151 to 153 (SAK) each bind GTP. The Effector region motif lies at 37–45 (YISTIGVDF). Residues 189–208 (QMKGRPIQQEQQKSSRCCST) are disordered. Residues 196-208 (QQEQQKSSRCCST) show a composition bias toward polar residues. S-geranylgeranyl cysteine attachment occurs at residues Cys-205 and Cys-206.

It belongs to the small GTPase superfamily. Rab family. As to expression, low levels in coleoptiles.

Its subcellular location is the cell membrane. Protein transport. Probably involved in vesicular traffic. The polypeptide is GTP-binding protein YPTM1 (YPTM1) (Zea mays (Maize)).